The chain runs to 517 residues: Lysine--tRNA ligase (517 aa).

The segment at 1–21 is disordered; that stretch reads MTEPNRAQAPAQNKAAADTPA. A compositionally biased stretch (low complexity) spans 7 to 20; sequence AQAPAQNKAAADTP. Glutamate 427 and glutamate 434 together coordinate Mg(2+).

This sequence belongs to the class-II aminoacyl-tRNA synthetase family. As to quaternary structure, homodimer. Mg(2+) serves as cofactor.

The protein resides in the cytoplasm. The enzyme catalyses tRNA(Lys) + L-lysine + ATP = L-lysyl-tRNA(Lys) + AMP + diphosphate. This Cupriavidus taiwanensis (strain DSM 17343 / BCRC 17206 / CCUG 44338 / CIP 107171 / LMG 19424 / R1) (Ralstonia taiwanensis (strain LMG 19424)) protein is Lysine--tRNA ligase.